Reading from the N-terminus, the 127-residue chain is Ribosome-binding factor A (127 aa).

The protein belongs to the RbfA family. Monomer. Binds 30S ribosomal subunits, but not 50S ribosomal subunits or 70S ribosomes.

Its subcellular location is the cytoplasm. In terms of biological role, one of several proteins that assist in the late maturation steps of the functional core of the 30S ribosomal subunit. Associates with free 30S ribosomal subunits (but not with 30S subunits that are part of 70S ribosomes or polysomes). Required for efficient processing of 16S rRNA. May interact with the 5'-terminal helix region of 16S rRNA. This chain is Ribosome-binding factor A, found in Aromatoleum aromaticum (strain DSM 19018 / LMG 30748 / EbN1) (Azoarcus sp. (strain EbN1)).